A 699-amino-acid chain; its full sequence is Auxin response factor 1 (699 aa).

The TF-B3 DNA-binding region spans 122 to 224 (FCKILTPSDT…EQRVGVRRLV (103 aa)). Disordered regions lie at residues 539–565 (TTTD…DSGQ) and 680–699 (EPHP…KTGF). The PB1 domain maps to 595 to 684 (RTRIKVQMHG…DEKKIEPHPK (90 aa)). Positions 687–699 (SSANPEQDQKTGF) are enriched in polar residues.

Belongs to the ARF family. In terms of assembly, homodimers and heterodimers. As to expression, expressed in roots, culms, leaves and young panicles.

The protein localises to the nucleus. Auxin response factors (ARFs) are transcriptional factors that bind specifically to the DNA sequence 5'-TGTCTC-3' found in the auxin-responsive promoter elements (AuxREs). The polypeptide is Auxin response factor 1 (ARF1) (Oryza sativa subsp. japonica (Rice)).